The primary structure comprises 164 residues: DNA-directed RNA polymerase 19 kDa subunit (164 aa).

Residues 1–35 show a composition bias toward acidic residues; that stretch reads MADTDDIIDYESDDLTEYEDDDEEEEDGESLETSD. Residues 1–39 are disordered; that stretch reads MADTDDIIDYESDDLTEYEDDDEEEEDGESLETSDIDPK.

This sequence belongs to the poxviridae DNA-directed RNA polymerase 19 kDa subunit family. The DNA-dependent RNA polymerase used for intermediate and late genes expression consists of eight subunits Rpo30/OPG66, Rpo7/OPG90, Rpo22/OPG103, Rpo147/OPG105, Rpo18/OPG119, Rpo19/OPG131, Rpo132/OPG151 and Rpo35/OPG156. The same holoenzyme, with the addition of the transcription-specificity factor OPG109, is used for early gene expression.

Its subcellular location is the virion. It catalyses the reaction RNA(n) + a ribonucleoside 5'-triphosphate = RNA(n+1) + diphosphate. In terms of biological role, part of the DNA-dependent RNA polymerase which catalyzes the transcription of viral DNA into RNA using the four ribonucleoside triphosphates as substrates. Responsible for the transcription of early, intermediate and late genes. DNA-dependent RNA polymerase associates with the early transcription factor (ETF), itself composed of OPG118 and OPG133, thereby allowing the early genes transcription. Late transcription, and probably also intermediate transcription, require newly synthesized RNA polymerase. In Variola virus (isolate Human/India/Ind3/1967) (VARV), this protein is DNA-directed RNA polymerase 19 kDa subunit (OPG131).